A 182-amino-acid chain; its full sequence is UPF0397 protein BCG9842_B2659 (182 aa).

Helical transmembrane passes span 9-29, 40-60, 71-91, 114-134, and 142-162; these read VVAIGIGAALYGILGLWGFSI, AILTVFGALFGPVAGLLIGLI, WGIWWGWVISSGIIGFSMGLI, ITGLVGIVIAIIFAGAFDIIV, and IVIQVLGATISDVIVFLVLGL.

The protein belongs to the UPF0397 family.

Its subcellular location is the cell membrane. The chain is UPF0397 protein BCG9842_B2659 from Bacillus cereus (strain G9842).